A 623-amino-acid polypeptide reads, in one-letter code: Pyranose 2-oxidase (623 aa).

An N-terminal signal peptide occupies residues 1–27 (MSTSSSDPFFNFTKSSFRSAAAQKASA). Positions 28-38 (TSLPPLPGPDK) are excised as a propeptide. H167 carries the tele-8alpha-FAD histidine modification. Residues Q448 and H450 each coordinate substrate. H548 (proton acceptor) is an active-site residue. N593 is an active-site residue.

Belongs to the GMC oxidoreductase family. In terms of assembly, homotetramer. It depends on FAD as a cofactor. Not glycosylated.

Its subcellular location is the periplasm. The enzyme catalyses D-glucose + O2 = 2-dehydro-D-glucose + H2O2. Its function is as follows. Catalyzes the oxidation of various aldopyranoses and disaccharides on carbon-2 to the corresponding 2-keto sugars concomitant with the reduction of O(2) to H(2)O(2). Plays an important role in lignin degradation of wood rot fungi by supplying the essential cosubstrate H(2)O(2) for the ligninolytic peroxidases, lignin peroxidase and manganese-dependent peroxidase. The preferred substrate is D-glucose which is converted to 2-dehydro-D-glucose. Also acts on D-xylose, together with D-glucose the major sugars derived from wood, on L-sorbose, D-galactose and 1,5-anhydroglucitol, a diagnostic marker of diabetes mellitus. The chain is Pyranose 2-oxidase (P2OX) from Trametes versicolor (White-rot fungus).